A 250-amino-acid chain; its full sequence is 5-oxoprolinase subunit A (250 aa).

This sequence belongs to the LamB/PxpA family. As to quaternary structure, forms a complex composed of PxpA, PxpB and PxpC.

The enzyme catalyses 5-oxo-L-proline + ATP + 2 H2O = L-glutamate + ADP + phosphate + H(+). Functionally, catalyzes the cleavage of 5-oxoproline to form L-glutamate coupled to the hydrolysis of ATP to ADP and inorganic phosphate. In Staphylococcus aureus (strain MW2), this protein is 5-oxoprolinase subunit A.